The sequence spans 142 residues: E1B protein, small T-antigen (142 aa).

Belongs to the adenoviridae E1B 19 kDa protein family.

It is found in the host cell membrane. Its subcellular location is the host nucleus envelope. The protein localises to the host nucleus lamina. In terms of biological role, putative adenovirus Bcl-2 homolog that inhibits apoptosis induced by TNF or FAS pathways, as well as p53-mediated apoptosis. Without E1B 19K function, virus production is compromised because of premature death of host cell. Interacts with Bax protein in cell lysates. The chain is E1B protein, small T-antigen from Homo sapiens (Human).